Reading from the N-terminus, the 146-residue chain is Globin (146 aa).

Residue Ala1 is modified to N-acetylalanine. Positions 1–146 (ALSAAEAEVV…IIDAMKKAGK (146 aa)) constitute a Globin domain. Heme b is bound at residue His95.

The protein belongs to the globin family. In terms of assembly, monomer.

In Dolabella auricularia (Shoulderblade sea cat), this protein is Globin.